We begin with the raw amino-acid sequence, 887 residues long: 3-hydroxy-3-methylglutaryl-coenzyme A reductase (887 aa).

Residues 1 to 9 are Cytoplasmic-facing; that stretch reads MLSRLFRMH. Residues 10-39 traverse the membrane as a helical segment; the sequence is GLFVASHPWEVIVGTVTLTICMMSMNMFTG. At 40 to 56 the chain is on the lumenal side; sequence NNKICGWNYECPKFEED. The helical transmembrane segment at 57–78 threads the bilayer; the sequence is VLSSDIIILTITRCIAILYIYF. The 158-residue stretch at 61-218 folds into the SSD domain; it reads DIIILTITRC…MTFFPACVSL (158 aa). Positions 75–78 match the INSIG-binding motif motif; that stretch reads YIYF. The Cytoplasmic segment spans residues 79–89; that stretch reads QFQNLRQLGSK. A Glycyl lysine isopeptide (Lys-Gly) (interchain with G-Cter in ubiquitin) cross-link involves residue Lys-89. A helical transmembrane segment spans residues 90 to 114; the sequence is YILGIAGLFTIFSSFVFSTVVIHFL. At 115-123 the chain is on the lumenal side; that stretch reads DKELTGLNE. A helical membrane pass occupies residues 124–149; the sequence is ALPFFLLLIDLSRASALAKFALSSNS. The Cytoplasmic portion of the chain corresponds to 150–159; that stretch reads QDEVRENIAR. Residues 160–187 traverse the membrane as a helical segment; it reads GMAILGPTFTLDALVECLVIGVGTMSGV. Over 188–191 the chain is Lumenal; sequence RQLE. A helical membrane pass occupies residues 192–220; the sequence is IMCCFGCMSVLANYFVFMTFFPACVSLVL. Over 221–248 the chain is Cytoplasmic; that stretch reads ELSRESREGRPIWQLSHFARVLEEEENK. Lys-248 participates in a covalent cross-link: Glycyl lysine isopeptide (Lys-Gly) (interchain with G-Cter in ubiquitin). A helical transmembrane segment spans residues 249–275; that stretch reads PNPVTQRVKMIMSLGLVLVHAHSRWIA. Topologically, residues 276-314 are lumenal; the sequence is DPSPQNSTAEQAKVSLGLDEDVSKRIEPSVSLWQFYLSK. The N-linked (GlcNAc...) asparagine glycan is linked to Asn-281. Residues 315–339 traverse the membrane as a helical segment; that stretch reads MISMDIEQVITLSLAFLLAVKYIFF. At 340 to 887 the chain is on the cytoplasmic side; sequence EQAETESTLS…LQGTCTKKAA (548 aa). Catalysis depends on charge relay system residues Glu-558, Lys-690, and Asp-766. The active-site Proton donor is the His-865. Ser-871 carries the post-translational modification Phosphoserine.

It belongs to the HMG-CoA reductase family. In terms of assembly, homotetramer. Homodimer. Interacts (via its SSD) with INSIG1; the interaction, accelerated by sterols, leads to the recruitment of HMGCR to AMFR/gp78 for its ubiquitination by the sterol-mediated ERAD pathway. Interacts with UBIAD1. Post-translationally, undergoes sterol-mediated ubiquitination and ER-associated degradation (ERAD). Accumulation of sterols in the endoplasmic reticulum (ER) membrane, triggers binding of the reductase to the ER membrane protein INSIG1 or INSIG2. The INSIG1 binding leads to the recruitment of the ubiquitin ligase, AMFR/gp78, RNF139 or RNF145, initiating ubiquitination of the reductase. The ubiquitinated reductase is then extracted from the ER membrane and delivered to cytosolic 26S proteosomes by a mechanism probably mediated by the ATPase Valosin-containing protein VCP/p97. The INSIG2-binding leads to the recruitment of the ubiquitin ligase RNF139, initiating ubiquitination of the reductase. Lys-248 is the main site of ubiquitination. Ubiquitination is enhanced by the presence of a geranylgeranylated protein. N-glycosylated. Deglycosylated by NGLY1 on release from the endoplasmic reticulum (ER) in a sterol-mediated manner. In terms of processing, phosphorylated. Phosphorylation at Ser-871 reduces the catalytic activity.

It is found in the endoplasmic reticulum membrane. Its subcellular location is the peroxisome membrane. It carries out the reaction (R)-mevalonate + 2 NADP(+) + CoA = (3S)-3-hydroxy-3-methylglutaryl-CoA + 2 NADPH + 2 H(+). The protein operates within metabolic intermediate biosynthesis; (R)-mevalonate biosynthesis; (R)-mevalonate from acetyl-CoA: step 3/3. Regulated by a negative feedback mechanism through sterols and non-sterol metabolites derived from mevalonate. Phosphorylation at Ser-871 down-regulates the catalytic activity. Its function is as follows. Catalyzes the conversion of (3S)-hydroxy-3-methylglutaryl-CoA (HMG-CoA) to mevalonic acid, the rate-limiting step in the synthesis of cholesterol and other isoprenoids, thus plays a critical role in cellular cholesterol homeostasis. The protein is 3-hydroxy-3-methylglutaryl-coenzyme A reductase (Hmgcr) of Mus musculus (Mouse).